The following is a 153-amino-acid chain: MAL-like protein (153 aa).

A run of 4 helical transmembrane segments spans residues 22 to 42, 59 to 79, 97 to 117, and 131 to 151; these read LFLT…FLVW, VMYV…SYLF, GTTG…TIVS, and AASF…FSIY. The region spanning 22–153 is the MARVEL domain; that stretch reads LFLTIPFAFF…ILHAFSIYYH (132 aa).

Belongs to the MAL family.

Its subcellular location is the membrane. The chain is MAL-like protein (MALL) from Homo sapiens (Human).